A 369-amino-acid polypeptide reads, in one-letter code: tRNA/tmRNA (uracil-C(5))-methyltransferase (369 aa).

S-adenosyl-L-methionine contacts are provided by glutamine 190, tyrosine 218, asparagine 223, glutamate 239, and aspartate 301. Catalysis depends on cysteine 326, which acts as the Nucleophile. Residue glutamate 360 is the Proton acceptor of the active site.

Belongs to the class I-like SAM-binding methyltransferase superfamily. RNA M5U methyltransferase family. TrmA subfamily.

It catalyses the reaction uridine(54) in tRNA + S-adenosyl-L-methionine = 5-methyluridine(54) in tRNA + S-adenosyl-L-homocysteine + H(+). The enzyme catalyses uridine(341) in tmRNA + S-adenosyl-L-methionine = 5-methyluridine(341) in tmRNA + S-adenosyl-L-homocysteine + H(+). Dual-specificity methyltransferase that catalyzes the formation of 5-methyluridine at position 54 (m5U54) in all tRNAs, and that of position 341 (m5U341) in tmRNA (transfer-mRNA). This is tRNA/tmRNA (uracil-C(5))-methyltransferase from Vibrio vulnificus (strain CMCP6).